We begin with the raw amino-acid sequence, 283 residues long: Biotin synthase (283 aa).

The Radical SAM core domain occupies 3–232 (KISNEIFLCS…NTRLMIAGGR (230 aa)). [4Fe-4S] cluster-binding residues include Cys-21, Cys-25, and Cys-28. Cys-65, Cys-100, and Arg-225 together coordinate [2Fe-2S] cluster.

The protein belongs to the radical SAM superfamily. Biotin synthase family. As to quaternary structure, homodimer. Requires [4Fe-4S] cluster as cofactor. The cofactor is [2Fe-2S] cluster.

The catalysed reaction is (4R,5S)-dethiobiotin + (sulfur carrier)-SH + 2 reduced [2Fe-2S]-[ferredoxin] + 2 S-adenosyl-L-methionine = (sulfur carrier)-H + biotin + 2 5'-deoxyadenosine + 2 L-methionine + 2 oxidized [2Fe-2S]-[ferredoxin]. The protein operates within cofactor biosynthesis; biotin biosynthesis; biotin from 7,8-diaminononanoate: step 2/2. Its function is as follows. Catalyzes the conversion of dethiobiotin (DTB) to biotin by the insertion of a sulfur atom into dethiobiotin via a radical-based mechanism. This Helicobacter hepaticus (strain ATCC 51449 / 3B1) protein is Biotin synthase.